Reading from the N-terminus, the 179-residue chain is Prion-like protein doppel (179 aa).

A signal peptide spans 1–25; sequence MKNRLGTWWVAILCMLLASHLSTVK. The flexible tail stretch occupies residues 27–50; it reads RGIKHRFKWNRKVLPSSGGQITEA. The tract at residues 51-155 is globular; sequence RVAENRPGAF…KHCDFWLERG (105 aa). 2 disulfide bridges follow: Cys-95/Cys-148 and Cys-109/Cys-143. Residues Asn-99 and Asn-111 are each glycosylated (N-linked (GlcNAc...) asparagine). A cu(2+) binding region spans residues 125 to 142; the sequence is KQDSKLHQRVLWRLIKEI. Residue Gly-155 is the site of GPI-anchor amidated glycine attachment. A propeptide spans 156-179 (removed in mature form); sequence AALRVAVDQPAMVCLLGFVWFIVK.

The protein belongs to the prion family. Post-translationally, N-glycosylated. N-glycosylated at two distinct sites. In terms of processing, O-glycosylated. In terms of tissue distribution, detected in testis. Detected within seminiferous tubules, on round and elongated spermatids (at protein level). Not detected in brain (at protein level). Detected in testis, and at low levels in heart. Expression in brain is very low and barely detectable.

It localises to the cell membrane. In terms of biological role, required for normal acrosome reaction and for normal male fertility. Can bind Cu(2+). The sequence is that of Prion-like protein doppel (Prnd) from Mus musculus (Mouse).